The chain runs to 132 residues: Pro-MCH 1 (132 aa).

Residues 1-24 (MRHSVLSISFAVALFLECYTPSTA) form the signal peptide. Cysteine 120 and cysteine 129 form a disulfide bridge.

This sequence belongs to the melanin-concentrating hormone family. Pituitary gland. Produced in neurons of lateral basal hypothalamus which project both to the brain and to the neural lobe of the pituitary gland from where MCH is released.

Plays a role in skin pigmentation by antagonizing the action of melanotropin alpha. Induces melanin concentration within the melanophores. May participate in the control of the hypothalamo-pituitary adrenal gland axis by inhibiting the release of ACTH. The protein is Pro-MCH 1 (mch1) of Oncorhynchus mykiss (Rainbow trout).